A 210-amino-acid chain; its full sequence is Secreted isochorismatase effector Isc1 (210 aa).

Active-site residues include Asp-25, Lys-90, and Cys-124.

The protein belongs to the isochorismatase family.

The protein localises to the secreted. It localises to the host cytoplasm. The protein resides in the host nucleus. The catalysed reaction is isochorismate + H2O = (2S,3S)-2,3-dihydroxy-2,3-dihydrobenzoate + pyruvate. Secreted isochorismatase required for full virulence of P.sojae. Suppresses salicylate-mediated innate immunity of the host by disrupting the plant salicylate metabolism pathway via hydrolysis of its isochorismate precursor. This chain is Secreted isochorismatase effector Isc1, found in Phytophthora sojae (strain P6497) (Soybean stem and root rot agent).